The following is a 190-amino-acid chain: Potassium-transporting ATPase KdpC subunit (190 aa).

A helical membrane pass occupies residues 10–30 (VLLLVLTGLTGFAYPLLSTAI).

This sequence belongs to the KdpC family. In terms of assembly, the system is composed of three essential subunits: KdpA, KdpB and KdpC.

Its subcellular location is the cell inner membrane. Its function is as follows. Part of the high-affinity ATP-driven potassium transport (or Kdp) system, which catalyzes the hydrolysis of ATP coupled with the electrogenic transport of potassium into the cytoplasm. This subunit acts as a catalytic chaperone that increases the ATP-binding affinity of the ATP-hydrolyzing subunit KdpB by the formation of a transient KdpB/KdpC/ATP ternary complex. The sequence is that of Potassium-transporting ATPase KdpC subunit from Sorangium cellulosum (strain So ce56) (Polyangium cellulosum (strain So ce56)).